The chain runs to 254 residues: Thiazole synthase (254 aa).

Residue Lys-96 is the Schiff-base intermediate with DXP of the active site. 1-deoxy-D-xylulose 5-phosphate contacts are provided by residues Gly-157, 183 to 184 (AG), and 205 to 206 (NT).

Belongs to the ThiG family. As to quaternary structure, homotetramer. Forms heterodimers with either ThiH or ThiS.

The protein resides in the cytoplasm. The catalysed reaction is [ThiS sulfur-carrier protein]-C-terminal-Gly-aminoethanethioate + 2-iminoacetate + 1-deoxy-D-xylulose 5-phosphate = [ThiS sulfur-carrier protein]-C-terminal Gly-Gly + 2-[(2R,5Z)-2-carboxy-4-methylthiazol-5(2H)-ylidene]ethyl phosphate + 2 H2O + H(+). It functions in the pathway cofactor biosynthesis; thiamine diphosphate biosynthesis. Its function is as follows. Catalyzes the rearrangement of 1-deoxy-D-xylulose 5-phosphate (DXP) to produce the thiazole phosphate moiety of thiamine. Sulfur is provided by the thiocarboxylate moiety of the carrier protein ThiS. In vitro, sulfur can be provided by H(2)S. This is Thiazole synthase from Clostridium perfringens (strain SM101 / Type A).